Reading from the N-terminus, the 197-residue chain is dITP/XTP pyrophosphatase (197 aa).

Residue 9–14 (TNNLNK) coordinates substrate. Glu42 and Asp71 together coordinate Mg(2+). Residue Asp71 is the Proton acceptor of the active site. Substrate contacts are provided by residues Ser72, 153–156 (FGYD), Lys176, and 181–182 (HR).

This sequence belongs to the HAM1 NTPase family. As to quaternary structure, homodimer. It depends on Mg(2+) as a cofactor.

The enzyme catalyses XTP + H2O = XMP + diphosphate + H(+). It catalyses the reaction dITP + H2O = dIMP + diphosphate + H(+). The catalysed reaction is ITP + H2O = IMP + diphosphate + H(+). Functionally, pyrophosphatase that catalyzes the hydrolysis of nucleoside triphosphates to their monophosphate derivatives, with a high preference for the non-canonical purine nucleotides XTP (xanthosine triphosphate), dITP (deoxyinosine triphosphate) and ITP. Seems to function as a house-cleaning enzyme that removes non-canonical purine nucleotides from the nucleotide pool, thus preventing their incorporation into DNA/RNA and avoiding chromosomal lesions. This is dITP/XTP pyrophosphatase from Leptospira interrogans serogroup Icterohaemorrhagiae serovar copenhageni (strain Fiocruz L1-130).